Reading from the N-terminus, the 268-residue chain is uncharacterized protein (268 aa).

It to yeast YKR075c.

This is an uncharacterized protein from Saccharomyces cerevisiae (strain ATCC 204508 / S288c) (Baker's yeast).